Consider the following 797-residue polypeptide: Plakophilin-3 (797 aa).

Residues 58-81 are disordered; the sequence is GQQSRHNGSAELDGSAESARGMPR. At Arg81 the chain carries Omega-N-methylarginine. A phosphoserine mark is found at Ser123, Ser180, and Ser183. Position 195 is a phosphotyrosine (Tyr195). Low complexity predominate over residues 219–228; it reads ASSGSSRAGG. A disordered region spans residues 219–241; sequence ASSGSSRAGGLDWPEATEGPPSR. Phosphoserine is present on Ser240. Thr250 carries the phosphothreonine modification. The interval 253–274 is disordered; it reads RFQSSHRSRGGTGSVSGAGLEP. Position 261 is an omega-N-methylarginine (Arg261). Residues 283–288 are required for interaction with SFN; the sequence is SLSLSL. A phosphoserine mark is found at Ser285, Ser313, Ser314, and Ser331. A required for interaction with GSK3B region spans residues 294 to 724; sequence LPDVRGLDSY…AEVLVNIIAV (431 aa). ARM repeat units lie at residues 305 to 348, 351 to 390, 393 to 432, 449 to 487, 491 to 536, 596 to 637, 645 to 684, and 689 to 730; these read GHRT…HRCY, AAAK…NLIY, VDNK…NLSS, TDLV…NLSS, ATRQ…NLSY, PKGL…NITA, VLSR…NLSR, and KDEM…NLVV. Residues 516–797 form a required for binding to PKP2 mRNA region; that stretch reads VGKCEDKSVE…GYRKEDFLGP (282 aa).

It belongs to the beta-catenin family. As to quaternary structure, found in a complex composed of CDH1, RAP1A and PKP3; PKP3 acts as a scaffold protein within the complex, the complex is required for CDH1 localization to mature desmosome cell junctions. Interacts with FXR1; the interaction facilitates the binding of PKP3 to PKP2 mRNA. Interacts (via ARM repeats) with GSK3B; the interaction may be involved in PKP3 protein degradation. Interacts with hyperphosphorylated and hypophosphorylated RB1; the interaction inhibits RB1 interaction with and repression of the transcription factor E2F1, potentially via sequestering RB1 to the cytoplasm. Interacts with CDKN1A; the interaction sequesters CDKN1A to the cytoplasm thereby repressing its role as an inhibitor of CDK4- and CDK6-driven RB1 phosphorylation. Interacts (via N-terminus) with SFN; the interaction maintains the cytoplasmic pool of PKP3, facilitates PKP3 exchange at desmosomes and restricts PKP3 localization to existing desmosome cell junctions. Interacts (via N-terminus) with JUP; the interaction is required for PKP3 localization to desmosome cell-cell junctions. Post-translationally, phosphorylated at Ser-285 when localized to the cytoplasm, PKP3 at desmosome cell junctions is not phosphorylated. Phosphorylation at Try-195 by SRC is induced by reactive oxygen species and potentially acts as a release mechanism from desmosome cell-cell junctions. Expressed in all layers of the epidermis, but is most abundant in the basal layer (at protein level). Expressed in keratinocytes of the epidermis at birth (at protein level). Expressed in the anagen non-keratinized inner root sheath cuticle and hair cuticle (at protein level). Also expressed in the matrix, precursors of the inner root sheath and hair shaft lineages (at protein level). Expressed at apical membranes in the outer hair root sheath and basal layer keratinocytes (at protein level). Expressed in intestinal epithelial cells and lamina propria of the ileum (at protein level). Expressed in keratinocytes (at protein level).

The protein resides in the nucleus. Its subcellular location is the cell junction. It localises to the desmosome. The protein localises to the cytoplasm. It is found in the cell membrane. The protein resides in the adherens junction. Its function is as follows. A component of desmosome cell-cell junctions which are required for positive regulation of cellular adhesion. Required for the localization of DSG2, DSP and PKP2 to mature desmosome junctions. May also play a role in the maintenance of DSG3 protein abundance in keratinocytes. Required for the formation of DSP-containing desmosome precursors in the cytoplasm during desmosome assembly. Also regulates the accumulation of CDH1 to mature desmosome junctions, via cAMP-dependent signaling and its interaction with activated RAP1A. Positively regulates the stabilization of PKP2 mRNA and therefore protein abundance, via its interaction with FXR1, may also regulate the protein abundance of DSP via the same mechanism. May also regulate the protein abundance of the desmosome component PKP1. Required for the organization of desmosome junctions at intercellular borders between basal keratinocytes of the epidermis, as a result plays a role in maintenance of the dermal barrier and regulation of the dermal inflammatory response. Required during epidermal keratinocyte differentiation for cell adherence at tricellular cell-cell contacts, via regulation of the timely formation of adherens junctions and desmosomes in a calcium-dependent manner, and may also play a role in the organization of the intracellular actin fiber belt. Acts as a negative regulator of the inflammatory response in hematopoietic cells of the skin and intestine, via modulation of proinflammatory cytokine production. Important for epithelial barrier maintenance in the intestine to reduce intestinal permeability, thereby plays a role in protection from intestinal-derived endotoxemia. Required for the development of hair follicles, via a role in the regulation of inner root sheaf length, correct alignment and anterior-posterior polarity of hair follicles. Promotes proliferation and cell-cycle G1/S phase transition of keratinocytes. Promotes E2F1-driven transcription of G1/S phase promoting genes by acting to release E2F1 from its inhibitory interaction with RB1, via sequestering RB1 and CDKN1A to the cytoplasm and thereby increasing CDK4- and CDK6-driven phosphorylation of RB1. May act as a scaffold protein to facilitate MAPK phosphorylation of RPS6KA protein family members and subsequently promote downstream EGFR signaling. May play a role in the positive regulation of transcription of Wnt-mediated TCF-responsive target genes. In Mus musculus (Mouse), this protein is Plakophilin-3 (Pkp3).